The sequence spans 287 residues: ATP synthase gamma chain (287 aa).

The protein belongs to the ATPase gamma chain family. F-type ATPases have 2 components, CF(1) - the catalytic core - and CF(0) - the membrane proton channel. CF(1) has five subunits: alpha(3), beta(3), gamma(1), delta(1), epsilon(1). CF(0) has three main subunits: a, b and c.

The protein resides in the cell inner membrane. Functionally, produces ATP from ADP in the presence of a proton gradient across the membrane. The gamma chain is believed to be important in regulating ATPase activity and the flow of protons through the CF(0) complex. This Yersinia enterocolitica serotype O:8 / biotype 1B (strain NCTC 13174 / 8081) protein is ATP synthase gamma chain.